The following is a 386-amino-acid chain: Eukaryotic translation initiation factor 3 subunit M (386 aa).

The region spanning 181–343 (NSELASKVMI…RKVHISSTMH (163 aa)) is the PCI domain.

This sequence belongs to the eIF-3 subunit M family. In terms of assembly, component of the eukaryotic translation initiation factor 3 (eIF-3) complex.

It is found in the cytoplasm. Its function is as follows. Component of the eukaryotic translation initiation factor 3 (eIF-3) complex, which is involved in protein synthesis of a specialized repertoire of mRNAs and, together with other initiation factors, stimulates binding of mRNA and methionyl-tRNAi to the 40S ribosome. The eIF-3 complex specifically targets and initiates translation of a subset of mRNAs involved in cell proliferation. The protein is Eukaryotic translation initiation factor 3 subunit M of Culex quinquefasciatus (Southern house mosquito).